Consider the following 201-residue polypeptide: MLKEIRPALVVLVVLTVICGLAYPLAMTGIAGVLFPEQAAGSLIVKDGAVIGSALIGQEFKDDKYFHGRPSATSAADPADPTKTVSSPYNAANSSGSNLGPTSKALNDRVKEDVDKLKAENPSAAVPVDLVTASGSGLDPEISPEAALFQVPRVARARGLSEDGVRKLVNAQTKGRFAGLLGEPRVNVLALNLALDATTRK.

A helical transmembrane segment spans residues 10-30 (VVLVVLTVICGLAYPLAMTGI). The segment at 67–105 (HGRPSATSAADPADPTKTVSSPYNAANSSGSNLGPTSKA) is disordered. The span at 70 to 82 (PSATSAADPADPT) shows a compositional bias: low complexity. Residues 83–105 (KTVSSPYNAANSSGSNLGPTSKA) show a composition bias toward polar residues.

This sequence belongs to the KdpC family. The system is composed of three essential subunits: KdpA, KdpB and KdpC.

It is found in the cell inner membrane. Its function is as follows. Part of the high-affinity ATP-driven potassium transport (or Kdp) system, which catalyzes the hydrolysis of ATP coupled with the electrogenic transport of potassium into the cytoplasm. This subunit acts as a catalytic chaperone that increases the ATP-binding affinity of the ATP-hydrolyzing subunit KdpB by the formation of a transient KdpB/KdpC/ATP ternary complex. This Rhodopseudomonas palustris (strain BisB5) protein is Potassium-transporting ATPase KdpC subunit.